We begin with the raw amino-acid sequence, 119 residues long: Aspartate 1-decarboxylase (119 aa).

The active-site Schiff-base intermediate with substrate; via pyruvic acid is the Ser-25. Pyruvic acid (Ser) is present on Ser-25. Thr-57 provides a ligand contact to substrate. The active-site Proton donor is the Tyr-58. 73-75 (GAA) is a substrate binding site.

It belongs to the PanD family. Heterooctamer of four alpha and four beta subunits. It depends on pyruvate as a cofactor. Is synthesized initially as an inactive proenzyme, which is activated by self-cleavage at a specific serine bond to produce a beta-subunit with a hydroxyl group at its C-terminus and an alpha-subunit with a pyruvoyl group at its N-terminus.

The protein localises to the cytoplasm. It catalyses the reaction L-aspartate + H(+) = beta-alanine + CO2. The protein operates within cofactor biosynthesis; (R)-pantothenate biosynthesis; beta-alanine from L-aspartate: step 1/1. Functionally, catalyzes the pyruvoyl-dependent decarboxylation of aspartate to produce beta-alanine. The chain is Aspartate 1-decarboxylase from Ruthia magnifica subsp. Calyptogena magnifica.